A 344-amino-acid polypeptide reads, in one-letter code: N-acetyl-gamma-glutamyl-phosphate reductase (344 aa).

Cysteine 148 is an active-site residue.

This sequence belongs to the NAGSA dehydrogenase family. Type 1 subfamily.

The protein resides in the cytoplasm. The catalysed reaction is N-acetyl-L-glutamate 5-semialdehyde + phosphate + NADP(+) = N-acetyl-L-glutamyl 5-phosphate + NADPH + H(+). The protein operates within amino-acid biosynthesis; L-arginine biosynthesis; N(2)-acetyl-L-ornithine from L-glutamate: step 3/4. Catalyzes the NADPH-dependent reduction of N-acetyl-5-glutamyl phosphate to yield N-acetyl-L-glutamate 5-semialdehyde. This is N-acetyl-gamma-glutamyl-phosphate reductase from Geobacillus kaustophilus (strain HTA426).